We begin with the raw amino-acid sequence, 487 residues long: Virulence sensor histidine kinase PhoQ (487 aa).

The Cytoplasmic segment spans residues 1–16 (MNKFARHFLPLSLRVR). Residues 17-37 (FLLATAGVVLVLSLAYGIVAL) traverse the membrane as a helical segment. The Periplasmic portion of the chain corresponds to 38-193 (VGYSVSFDKT…ELKRSYMVWS (156 aa)). A divalent metal cation-binding residues include Asp-151 and Asp-152. Residues 194–214 (WFVYVLAANLLLVIPLLWIAA) form a helical membrane-spanning segment. The HAMP domain maps to 215 to 266 (WWSLRPIEALAREVRELEDHHREMLNPETTRELTSLVRNLNQLLKSERERYN). At 215 to 487 (WWSLRPIEAL…GRQHPTQKEE (273 aa)) the chain is on the cytoplasmic side. The Histidine kinase domain occupies 274 to 481 (DLTHSLKTPL…RMEVVFGRQH (208 aa)). A Phosphohistidine; by autocatalysis modification is found at His-277. Asn-386 is a binding site for Mg(2+). ATP is bound by residues 386–394 (NVLDNACKY), 416–421 (DDGPGI), and 435–447 (RADT…GVGL). Gln-443 contacts Mg(2+).

Homodimer.

The protein localises to the cell inner membrane. It catalyses the reaction ATP + protein L-histidine = ADP + protein N-phospho-L-histidine.. In terms of biological role, member of the two-component regulatory system PhoP/PhoQ which regulates the expression of genes involved in virulence and resistance to host defense antimicrobial peptides. In low periplasmic Mg(2+), PhoQ functions as a membrane-associated protein kinase that undergoes autophosphorylation and subsequently transfers the phosphate to PhoP, which results in the expression of PhoP-activated genes (PAG) and repression of PhoP-repressed genes (PRG). In high periplasmic Mg(2+), acts as a protein phosphatase that dephosphorylates phospho-PhoP, which results in the repression of PAG and may lead to expression of some PRG. The polypeptide is Virulence sensor histidine kinase PhoQ (phoQ) (Salmonella paratyphi A (strain ATCC 9150 / SARB42)).